The chain runs to 225 residues: Zinc finger protein 22 (225 aa).

Positions 1–35 are disordered; sequence MRLGKPKGGISRSSSQGKVYENQRKTGRQRQRWGM. N6-acetyllysine is present on lysine 18. 5 consecutive C2H2-type zinc fingers follow at residues 55 to 77, 83 to 105, 111 to 133, 139 to 161, and 167 to 189; these read YKCVECEKSFSQSSTLFQHQKIH, HKCADCGKSFFQSSNLIQHRRVH, YRCDECGERFKQSSNLIQHQRIH, YQCDECGRCFSQSSHLIQHQRTH, and YQCSECGKCFSQSSHLRQHTKVH. Residues 183–225 are disordered; the sequence is RQHTKVHEEEKPRKTRGRSLRAKTHSLSSWKAGKGRRSAAGLR. Over residues 195–206 the composition is skewed to basic residues; that stretch reads RKTRGRSLRAKT.

This sequence belongs to the krueppel C2H2-type zinc-finger protein family.

The protein localises to the nucleus. Functionally, binds DNA through the consensus sequence 5'-CAATG-3'. May be involved in transcriptional regulation and may play a role in tooth formation. In Bos taurus (Bovine), this protein is Zinc finger protein 22 (ZNF22).